The following is a 314-amino-acid chain: Ribosomal RNA small subunit methyltransferase H (314 aa).

S-adenosyl-L-methionine is bound by residues 36–38 (GGH), Asp56, Phe80, Asp102, and Gln109. The tract at residues 278 to 300 (GGRSLKSIGKMKPSEEEVADNPR) is disordered. Over residues 289–300 (KPSEEEVADNPR) the composition is skewed to basic and acidic residues.

The protein belongs to the methyltransferase superfamily. RsmH family.

Its subcellular location is the cytoplasm. It carries out the reaction cytidine(1402) in 16S rRNA + S-adenosyl-L-methionine = N(4)-methylcytidine(1402) in 16S rRNA + S-adenosyl-L-homocysteine + H(+). Specifically methylates the N4 position of cytidine in position 1402 (C1402) of 16S rRNA. The polypeptide is Ribosomal RNA small subunit methyltransferase H (Photorhabdus laumondii subsp. laumondii (strain DSM 15139 / CIP 105565 / TT01) (Photorhabdus luminescens subsp. laumondii)).